Reading from the N-terminus, the 153-residue chain is Regulatory protein RecX (153 aa).

This sequence belongs to the RecX family.

Its subcellular location is the cytoplasm. Functionally, modulates RecA activity. This is Regulatory protein RecX from Syntrophotalea carbinolica (strain DSM 2380 / NBRC 103641 / GraBd1) (Pelobacter carbinolicus).